The following is a 430-amino-acid chain: uncharacterized protein (430 aa).

Positions 1–19 (MKILLFVVLFFNVLVGIYS) are cleaved as a signal peptide. The N-linked (GlcNAc...) asparagine glycan is linked to asparagine 39. A disordered region spans residues 119 to 408 (LDPNSSPSPS…ELLEKNSDGN (290 aa)). Pro residues predominate over residues 124–168 (SPSPSPSPSPSPSPSPSPSPSPSPSPSPSPSPSPSPSPSPSPSPS). Low complexity-rich tracts occupy residues 169 to 253 (PSSS…TPSQ) and 263 to 285 (PTPT…TQTP). Polar residues predominate over residues 286–303 (ISSRPMSISTEKPSSSEE). Asparagine 312 carries N-linked (GlcNAc...) asparagine glycosylation. Residues 316 to 325 (SEDKKKDSES) show a composition bias toward basic and acidic residues. Low complexity predominate over residues 326-370 (KSSQSESPSPSASASESESASESASASTSVSVSASPLPIMDSSSS). N-linked (GlcNAc...) asparagine glycosylation occurs at asparagine 408.

The protein resides in the secreted. This is an uncharacterized protein from Dictyostelium discoideum (Social amoeba).